The sequence spans 305 residues: Major pollen allergen Pha a 5.2 (305 aa).

A signal peptide spans M1–A25. The span at G65 to E85 shows a compositional bias: basic and acidic residues. 2 disordered regions span residues G65–N87 and S279–V299.

Belongs to the Poa p IX/Phl p VI allergen family.

The sequence is that of Major pollen allergen Pha a 5.2 from Phalaris aquatica (Canary grass).